We begin with the raw amino-acid sequence, 316 residues long: 4-hydroxy-3-methylbut-2-enyl diphosphate reductase (316 aa).

Position 12 (cysteine 12) interacts with [4Fe-4S] cluster. The (2E)-4-hydroxy-3-methylbut-2-enyl diphosphate site is built by histidine 41 and histidine 74. Dimethylallyl diphosphate-binding residues include histidine 41 and histidine 74. Residues histidine 41 and histidine 74 each contribute to the isopentenyl diphosphate site. Cysteine 96 is a [4Fe-4S] cluster binding site. Histidine 124 contacts (2E)-4-hydroxy-3-methylbut-2-enyl diphosphate. Histidine 124 contacts dimethylallyl diphosphate. An isopentenyl diphosphate-binding site is contributed by histidine 124. Glutamate 126 functions as the Proton donor in the catalytic mechanism. Position 169 (threonine 169) interacts with (2E)-4-hydroxy-3-methylbut-2-enyl diphosphate. A [4Fe-4S] cluster-binding site is contributed by cysteine 199. Serine 227, serine 228, asparagine 229, and serine 271 together coordinate (2E)-4-hydroxy-3-methylbut-2-enyl diphosphate. Dimethylallyl diphosphate is bound by residues serine 227, serine 228, asparagine 229, and serine 271. The isopentenyl diphosphate site is built by serine 227, serine 228, asparagine 229, and serine 271.

The protein belongs to the IspH family. The cofactor is [4Fe-4S] cluster.

It carries out the reaction isopentenyl diphosphate + 2 oxidized [2Fe-2S]-[ferredoxin] + H2O = (2E)-4-hydroxy-3-methylbut-2-enyl diphosphate + 2 reduced [2Fe-2S]-[ferredoxin] + 2 H(+). It catalyses the reaction dimethylallyl diphosphate + 2 oxidized [2Fe-2S]-[ferredoxin] + H2O = (2E)-4-hydroxy-3-methylbut-2-enyl diphosphate + 2 reduced [2Fe-2S]-[ferredoxin] + 2 H(+). The protein operates within isoprenoid biosynthesis; dimethylallyl diphosphate biosynthesis; dimethylallyl diphosphate from (2E)-4-hydroxy-3-methylbutenyl diphosphate: step 1/1. Its pathway is isoprenoid biosynthesis; isopentenyl diphosphate biosynthesis via DXP pathway; isopentenyl diphosphate from 1-deoxy-D-xylulose 5-phosphate: step 6/6. In terms of biological role, catalyzes the conversion of 1-hydroxy-2-methyl-2-(E)-butenyl 4-diphosphate (HMBPP) into a mixture of isopentenyl diphosphate (IPP) and dimethylallyl diphosphate (DMAPP). Acts in the terminal step of the DOXP/MEP pathway for isoprenoid precursor biosynthesis. The chain is 4-hydroxy-3-methylbut-2-enyl diphosphate reductase from Stenotrophomonas maltophilia (strain K279a).